The sequence spans 328 residues: Phenylalanine--tRNA ligase alpha subunit (328 aa).

Glu-245 lines the Mg(2+) pocket.

Belongs to the class-II aminoacyl-tRNA synthetase family. Phe-tRNA synthetase alpha subunit type 1 subfamily. Tetramer of two alpha and two beta subunits. Mg(2+) is required as a cofactor.

The protein localises to the cytoplasm. It carries out the reaction tRNA(Phe) + L-phenylalanine + ATP = L-phenylalanyl-tRNA(Phe) + AMP + diphosphate + H(+). In Helicobacter pylori (strain Shi470), this protein is Phenylalanine--tRNA ligase alpha subunit.